The chain runs to 316 residues: Lipooligosaccharide heptosyltransferase 2 (316 aa).

This sequence belongs to the glycosyltransferase 9 family.

The catalysed reaction is an L-alpha-D-Hep-(1-&gt;5)-[alpha-Kdo-(2-&gt;4)]-alpha-Kdo-(2-&gt;6)-lipid A + ADP-L-glycero-beta-D-manno-heptose = an L-alpha-D-Hep-(1-&gt;3)-L-alpha-D-Hep-(1-&gt;5)-[alpha-Kdo-(2-&gt;4)]-alpha-Kdo-(2-&gt;6)-lipid A + ADP + H(+). The protein operates within bacterial outer membrane biogenesis; LOS core biosynthesis. Glycosyltransferase involved in the biosynthesis of the core oligosaccharide region of lipooligosaccharide (LOS). Catalyzes the addition of the second heptose unit to the heptosyl-Kdo2-lipid A module. The sequence is that of Lipooligosaccharide heptosyltransferase 2 from Campylobacter jejuni subsp. jejuni serotype O:6 (strain 81116 / NCTC 11828).